A 72-amino-acid chain; its full sequence is Exodeoxyribonuclease 7 small subunit (72 aa).

Belongs to the XseB family. In terms of assembly, heterooligomer composed of large and small subunits.

It is found in the cytoplasm. It carries out the reaction Exonucleolytic cleavage in either 5'- to 3'- or 3'- to 5'-direction to yield nucleoside 5'-phosphates.. Its function is as follows. Bidirectionally degrades single-stranded DNA into large acid-insoluble oligonucleotides, which are then degraded further into small acid-soluble oligonucleotides. The sequence is that of Exodeoxyribonuclease 7 small subunit from Clostridium kluyveri (strain NBRC 12016).